A 410-amino-acid polypeptide reads, in one-letter code: NADH-quinone oxidoreductase subunit D (410 aa).

The protein belongs to the complex I 49 kDa subunit family. In terms of assembly, NDH-1 is composed of 14 different subunits. Subunits NuoB, C, D, E, F, and G constitute the peripheral sector of the complex.

The protein resides in the cell inner membrane. It carries out the reaction a quinone + NADH + 5 H(+)(in) = a quinol + NAD(+) + 4 H(+)(out). NDH-1 shuttles electrons from NADH, via FMN and iron-sulfur (Fe-S) centers, to quinones in the respiratory chain. The immediate electron acceptor for the enzyme in this species is believed to be ubiquinone. Couples the redox reaction to proton translocation (for every two electrons transferred, four hydrogen ions are translocated across the cytoplasmic membrane), and thus conserves the redox energy in a proton gradient. The sequence is that of NADH-quinone oxidoreductase subunit D from Nitratiruptor sp. (strain SB155-2).